The primary structure comprises 262 residues: Type III pantothenate kinase (262 aa).

Asp9–Lys16 serves as a coordination point for ATP. Substrate-binding positions include Tyr96 and Gly103–Arg106. Residue Asp105 is the Proton acceptor of the active site. Thr129 is a binding site for ATP. Residue Thr189 coordinates substrate.

It belongs to the type III pantothenate kinase family. As to quaternary structure, homodimer. NH4(+) is required as a cofactor. K(+) serves as cofactor.

The protein resides in the cytoplasm. It catalyses the reaction (R)-pantothenate + ATP = (R)-4'-phosphopantothenate + ADP + H(+). It participates in cofactor biosynthesis; coenzyme A biosynthesis; CoA from (R)-pantothenate: step 1/5. In terms of biological role, catalyzes the phosphorylation of pantothenate (Pan), the first step in CoA biosynthesis. This chain is Type III pantothenate kinase, found in Burkholderia multivorans (strain ATCC 17616 / 249).